The sequence spans 103 residues: Histone H4 (103 aa).

Gly residues predominate over residues 1 to 14 (MTGRGKGGKGLGKG). A disordered region spans residues 1 to 20 (MTGRGKGGKGLGKGGAKRHR). Thr2 bears the N-acetylthreonine mark. The residue at position 6 (Lys6) is an N6-acetyl-N6-methyllysine; alternate. 4 positions are modified to N6-acetyllysine: Lys6, Lys9, Lys13, and Lys17. N6-acetyl-N6-methyllysine; alternate is present on Lys13. At Lys21 the chain carries N6,N6-dimethyllysine. Lys32 carries the post-translational modification N6-methyllysine.

This sequence belongs to the histone H4 family. In terms of assembly, the nucleosome is a histone octamer containing two molecules each of H2A, H2B, H3 and H4 assembled in one H3-H4 heterotetramer and two H2A-H2B heterodimers. The octamer wraps approximately 147 bp of DNA.

It localises to the nucleus. The protein resides in the chromosome. Functionally, core component of nucleosome. Nucleosomes wrap and compact DNA into chromatin, limiting DNA accessibility to the cellular machineries which require DNA as a template. Histones thereby play a central role in transcription regulation, DNA repair, DNA replication and chromosomal stability. DNA accessibility is regulated via a complex set of post-translational modifications of histones, also called histone code, and nucleosome remodeling. Its function is as follows. A mixture of histones H2B and H4 has antimicrobial activity against the Gram-positive bacterium M.luteus. The chain is Histone H4 from Penaeus vannamei (Whiteleg shrimp).